The following is a 179-amino-acid chain: Warthog protein 3 (179 aa).

The signal sequence occupies residues 1 to 19 (MLYHVEMFTIILLFGFSLA). N-linked (GlcNAc...) asparagine glycosylation is found at N52 and N147.

In terms of tissue distribution, expressed in the trinucleate pharyngeal gland cell g1, seam cells and hypodermis.

The protein resides in the secreted. In terms of biological role, intercellular signal essential for a variety of patterning events during development. The protein is Warthog protein 3 (wrt-3) of Caenorhabditis elegans.